The primary structure comprises 479 residues: MRVLHVCSELFPLLKTGGLADVAGALPGAQIAAGMDVRVILPAFPDLKKGIANLQVVRELDTFAGHVTLLFGHFNGVGIYLIDVPELYERAGSPYHDPALYAYADNYLRFALLGWMGCEMACGLDHYWRPDIVHAHDWHAGLTCAYLAARNRPAKSIFTVHNLAYQGLFDARHMPDLHLPREFFQVYGLEFYGQISYLKAGLYYADHITTVSPTYAHEITLPAYGYGMEGLLKSREEEGRLSGILNGVDEMIWNPAHDPLLASHYSRDTLANKAENKRRLQTAMGLKVDDKVPVFAIVSRLTSQKGLDIALSAIPDLLEQGGQVVVLGAGDADLQEGFLAAAAEYHGQVGVQIGYHEAFSHRIIGGADVIMVPSRFEPCGLTQLYGLKYGTLPLVRRTGGLADTVSDCSLENLADGLASGFVFNDCSVGSLSRAIRRVFVLWSRPTLWRYVQRQAMAMDFGWQVAAQAYGALYQRLYTH.

Lys15 provides a ligand contact to ADP-alpha-D-glucose.

It belongs to the glycosyltransferase 1 family. Bacterial/plant glycogen synthase subfamily.

The enzyme catalyses [(1-&gt;4)-alpha-D-glucosyl](n) + ADP-alpha-D-glucose = [(1-&gt;4)-alpha-D-glucosyl](n+1) + ADP + H(+). The protein operates within glycan biosynthesis; glycogen biosynthesis. Functionally, synthesizes alpha-1,4-glucan chains using ADP-glucose. The polypeptide is Glycogen synthase (Pectobacterium carotovorum subsp. carotovorum (strain PC1)).